The chain runs to 208 residues: Outer-membrane lipoprotein carrier protein (208 aa).

An N-terminal signal peptide occupies residues 1-22; the sequence is MKNLLCAVMLTSPLLYSTAVFA.

The protein belongs to the LolA family. In terms of assembly, monomer.

It localises to the periplasm. Its function is as follows. Participates in the translocation of lipoproteins from the inner membrane to the outer membrane. Only forms a complex with a lipoprotein if the residue after the N-terminal Cys is not an aspartate (The Asp acts as a targeting signal to indicate that the lipoprotein should stay in the inner membrane). The protein is Outer-membrane lipoprotein carrier protein of Shewanella sp. (strain W3-18-1).